Consider the following 135-residue polypeptide: Retinol-binding protein 1 (135 aa).

Trp-9 carries the post-translational modification Omega-N-methylarginine. The interval 22 to 32 (RALDVNVALRK) is important for interaction with STRA6. 3 residues coordinate all-trans-retinol: Lys-41, Met-63, and Gln-109.

The protein belongs to the calycin superfamily. Fatty-acid binding protein (FABP) family. As to quaternary structure, interacts (only as retinol-free apoprotein) with STRA6. Detected in nearly all the tissues with higher expression in adult ovary, pancreas, pituitary gland and adrenal gland, and fetal liver.

The protein resides in the cytoplasm. It localises to the lipid droplet. Its function is as follows. Cytoplasmic retinol-binding protein. Accepts retinol from the transport protein STRA6, and thereby contributes to retinol uptake, storage and retinoid homeostasis. In Homo sapiens (Human), this protein is Retinol-binding protein 1 (RBP1).